The following is a 442-amino-acid chain: Histidine--tRNA ligase (442 aa).

The protein belongs to the class-II aminoacyl-tRNA synthetase family. In terms of assembly, homodimer.

It is found in the cytoplasm. It catalyses the reaction tRNA(His) + L-histidine + ATP = L-histidyl-tRNA(His) + AMP + diphosphate + H(+). This chain is Histidine--tRNA ligase, found in Rhodopirellula baltica (strain DSM 10527 / NCIMB 13988 / SH1).